We begin with the raw amino-acid sequence, 128 residues long: MGFLKFSPFLVVSILLLYQACGLQAVPLRSTLESSPGMAATLSEEEARLLLAALVQNYMQMKVRELEQEQEAEGSSVTAQKRSCNTATCVTHRLAGLLSRSGGVVKDNFVPTNVGSEAFGRRRRDLQA.

A signal peptide spans 1–25 (MGFLKFSPFLVVSILLLYQACGLQA). The propeptide occupies 26 to 80 (VPLRSTLESSPGMAATLSEEEARLLLAALVQNYMQMKVRELEQEQEAEGSSVTAQ). Cys84 and Cys89 form a disulfide bridge. Position 119 is a phenylalanine amide (Phe119). The propeptide occupies 125-128 (DLQA).

This sequence belongs to the calcitonin family.

Its subcellular location is the secreted. CGRP1/CALCA is a peptide hormone that induces vasodilation mediated by the CALCRL-RAMP1 receptor complex. Dilates a variety of vessels including the coronary, cerebral and systemic vasculature. Its abundance in the CNS also points toward a neurotransmitter or neuromodulator role. It also elevates platelet cAMP. CGRP1 can also bind and activate CALCR-RAMP1 (AMYR1) receptor complex. This chain is Calcitonin gene-related peptide 1, found in Rattus norvegicus (Rat).